We begin with the raw amino-acid sequence, 168 residues long: Photosystem I assembly protein Ycf3 (168 aa).

TPR repeat units follow at residues 35 to 68 (AFTY…EIDP), 72 to 105 (SYIL…NPFL), and 120 to 153 (GEKA…TPGN).

This sequence belongs to the Ycf3 family.

The protein resides in the plastid membrane. Essential for the assembly of the photosystem I (PSI) complex. May act as a chaperone-like factor to guide the assembly of the PSI subunits. This is Photosystem I assembly protein Ycf3 from Cuscuta exaltata (Tall dodder).